The following is a 204-amino-acid chain: Outer-membrane lipoprotein carrier protein (204 aa).

The signal sequence occupies residues 1–21; that stretch reads MKKIAVTCALLSAFAVSSVWA. The interval 169–204 is disordered; that stretch reads QRSSYQLKSQQNGAVDMSKFTFTPPQGVTVDDQRNK. The segment covering 171 to 181 has biased composition (polar residues); the sequence is SSYQLKSQQNG.

It belongs to the LolA family. Monomer.

It is found in the periplasm. In terms of biological role, participates in the translocation of lipoproteins from the inner membrane to the outer membrane. Only forms a complex with a lipoprotein if the residue after the N-terminal Cys is not an aspartate (The Asp acts as a targeting signal to indicate that the lipoprotein should stay in the inner membrane). This chain is Outer-membrane lipoprotein carrier protein, found in Cronobacter sakazakii (strain ATCC BAA-894) (Enterobacter sakazakii).